Here is a 347-residue protein sequence, read N- to C-terminus: ATPase GET3 (347 aa).

An ATP-binding site is contributed by Lys-26–Thr-33. The active site involves Asp-57. Positions 241 and 268 each coordinate ATP. 2 residues coordinate Zn(2+): Cys-279 and Cys-282.

It belongs to the arsA ATPase family. In terms of assembly, homodimer. Component of the Golgi to ER traffic (GET) complex, which is composed of GET1, GET2 and GET3. Within the complex, GET1 and GET2 form a heterotetramer which is stabilized by phosphatidylinositol binding and which binds to the GET3 homodimer. Interacts with the chloride channel protein GEF1.

It localises to the cytoplasm. It is found in the endoplasmic reticulum. The protein resides in the golgi apparatus. Its function is as follows. ATPase required for the post-translational delivery of tail-anchored (TA) proteins to the endoplasmic reticulum. Recognizes and selectively binds the transmembrane domain of TA proteins in the cytosol. This complex then targets to the endoplasmic reticulum by membrane-bound receptors GET1 and GET2, where the tail-anchored protein is released for insertion. This process is regulated by ATP binding and hydrolysis. ATP binding drives the homodimer towards the closed dimer state, facilitating recognition of newly synthesized TA membrane proteins. ATP hydrolysis is required for insertion. Subsequently, the homodimer reverts towards the open dimer state, lowering its affinity for the GET1-GET2 receptor, and returning it to the cytosol to initiate a new round of targeting. Cooperates with the HDEL receptor ERD2 to mediate the ATP-dependent retrieval of resident ER proteins that contain a C-terminal H-D-E-L retention signal from the Golgi to the ER. Involved in low-level resistance to the oxyanions arsenite and arsenate, and in heat tolerance. The protein is ATPase GET3 of Meyerozyma guilliermondii (strain ATCC 6260 / CBS 566 / DSM 6381 / JCM 1539 / NBRC 10279 / NRRL Y-324) (Yeast).